The primary structure comprises 142 residues: Protein NIM1-INTERACTING 1 (142 aa).

An involved in NPR1/NIM1 interaction region spans residues 47 to 53 (DTFFKLI). The Nuclear localization signal motif lies at 60–64 (RKRRR). Disordered regions lie at residues 63–86 (RREE…RSGI) and 108–142 (MFVS…NLAL). The stretch at 110–141 (VSDHKEENTKVEQEEDQTEERNEDKALDLNLA) forms a coiled coil. A compositionally biased stretch (basic and acidic residues) spans 111 to 121 (SDHKEENTKVE).

It belongs to the NPR1-interactor family. Interacts with NPR1 C-terminal region.

It is found in the nucleus. The polypeptide is Protein NIM1-INTERACTING 1 (Arabidopsis thaliana (Mouse-ear cress)).